Reading from the N-terminus, the 67-residue chain is Large ribosomal subunit protein uL29 (67 aa).

Belongs to the universal ribosomal protein uL29 family.

The chain is Large ribosomal subunit protein uL29 from Agathobacter rectalis (strain ATCC 33656 / DSM 3377 / JCM 17463 / KCTC 5835 / VPI 0990) (Eubacterium rectale).